The chain runs to 335 residues: Glucan endo-1,3-beta-glucosidase, acidic isoform (335 aa).

An N-terminal signal peptide occupies residues 1-29 (MARQGVIASMHALALLLGAFAAIPTGVQS). Catalysis depends on E122, which acts as the Proton donor. Residue E259 is the Nucleophile of the active site.

It belongs to the glycosyl hydrolase 17 family. Accumulates in aleurone layers. Much lower levels are found in the embryo, and none in starchy endosperm.

Its subcellular location is the secreted. It localises to the extracellular space. It carries out the reaction Hydrolysis of (1-&gt;3)-beta-D-glucosidic linkages in (1-&gt;3)-beta-D-glucans.. Its function is as follows. Is thought to be an important plant defense-related product against fungal pathogens. The protein is Glucan endo-1,3-beta-glucosidase, acidic isoform of Zea mays (Maize).